A 349-amino-acid polypeptide reads, in one-letter code: Flap endonuclease 1 (349 aa).

Positions 1-102 (MGVTELGKLI…AEIEARRRVK (102 aa)) are N-domain. Residues Asp31, Asp84, Glu156, Glu158, Asp177, Asp179, and Asp239 each contribute to the Mg(2+) site. Residues 120–261 (DVAKYMKRVI…KALKLVLEFG (142 aa)) form an I-domain region.

It belongs to the XPG/RAD2 endonuclease family. FEN1 subfamily. As to quaternary structure, interacts with PCNA. PCNA stimulates the nuclease activity without altering cleavage specificity. Mg(2+) is required as a cofactor.

In terms of biological role, structure-specific nuclease with 5'-flap endonuclease and 5'-3' exonuclease activities involved in DNA replication and repair. During DNA replication, cleaves the 5'-overhanging flap structure that is generated by displacement synthesis when DNA polymerase encounters the 5'-end of a downstream Okazaki fragment. Binds the unpaired 3'-DNA end and kinks the DNA to facilitate 5' cleavage specificity. Cleaves one nucleotide into the double-stranded DNA from the junction in flap DNA, leaving a nick for ligation. Also involved in the base excision repair (BER) pathway. Acts as a genome stabilization factor that prevents flaps from equilibrating into structures that lead to duplications and deletions. Also possesses 5'-3' exonuclease activity on nicked or gapped double-stranded DNA. This is Flap endonuclease 1 from Pyrobaculum neutrophilum (strain DSM 2338 / JCM 9278 / NBRC 100436 / V24Sta) (Thermoproteus neutrophilus).